We begin with the raw amino-acid sequence, 297 residues long: N-acetylneuraminate lyase (297 aa).

S47 and T48 together coordinate aceneuramate. Y137 (proton donor) is an active-site residue. The active-site Schiff-base intermediate with substrate is K165. Positions 167, 189, 191, 192, and 208 each coordinate aceneuramate.

Belongs to the DapA family. NanA subfamily. Homotetramer.

It is found in the cytoplasm. The catalysed reaction is aceneuramate = aldehydo-N-acetyl-D-mannosamine + pyruvate. It participates in amino-sugar metabolism; N-acetylneuraminate degradation; D-fructose 6-phosphate from N-acetylneuraminate: step 1/5. Catalyzes the reversible aldol cleavage of N-acetylneuraminic acid (sialic acid; Neu5Ac) to form pyruvate and N-acetylmannosamine (ManNAc) via a Schiff base intermediate. The protein is N-acetylneuraminate lyase of Shigella boydii serotype 4 (strain Sb227).